The following is a 130-amino-acid chain: Small ribosomal subunit protein uS9 (130 aa).

The protein belongs to the universal ribosomal protein uS9 family.

The polypeptide is Small ribosomal subunit protein uS9 (Marinobacter nauticus (strain ATCC 700491 / DSM 11845 / VT8) (Marinobacter aquaeolei)).